Here is a 367-residue protein sequence, read N- to C-terminus: DNA replication and repair protein RecF (367 aa).

30–37 provides a ligand contact to ATP; the sequence is GANGSGKT.

The protein belongs to the RecF family.

The protein resides in the cytoplasm. Its function is as follows. The RecF protein is involved in DNA metabolism; it is required for DNA replication and normal SOS inducibility. RecF binds preferentially to single-stranded, linear DNA. It also seems to bind ATP. This chain is DNA replication and repair protein RecF, found in Pseudomonas fluorescens (strain ATCC BAA-477 / NRRL B-23932 / Pf-5).